An 80-amino-acid polypeptide reads, in one-letter code: Exodeoxyribonuclease 7 small subunit (80 aa).

It belongs to the XseB family. Heterooligomer composed of large and small subunits.

The protein localises to the cytoplasm. The catalysed reaction is Exonucleolytic cleavage in either 5'- to 3'- or 3'- to 5'-direction to yield nucleoside 5'-phosphates.. Bidirectionally degrades single-stranded DNA into large acid-insoluble oligonucleotides, which are then degraded further into small acid-soluble oligonucleotides. This chain is Exodeoxyribonuclease 7 small subunit, found in Shigella sonnei (strain Ss046).